The sequence spans 166 residues: Regulatory protein RecX (166 aa).

This sequence belongs to the RecX family.

It is found in the cytoplasm. In terms of biological role, modulates RecA activity. This Salmonella newport (strain SL254) protein is Regulatory protein RecX.